A 159-amino-acid chain; its full sequence is Protein-export protein SecB (159 aa).

The protein belongs to the SecB family. Homotetramer, a dimer of dimers. One homotetramer interacts with 1 SecA dimer.

It localises to the cytoplasm. Functionally, one of the proteins required for the normal export of preproteins out of the cell cytoplasm. It is a molecular chaperone that binds to a subset of precursor proteins, maintaining them in a translocation-competent state. It also specifically binds to its receptor SecA. The polypeptide is Protein-export protein SecB (Bartonella bacilliformis (strain ATCC 35685 / KC583 / Herrer 020/F12,63)).